Here is a 101-residue protein sequence, read N- to C-terminus: Urease subunit beta (101 aa).

It belongs to the urease beta subunit family. Heterotrimer of UreA (gamma), UreB (beta) and UreC (alpha) subunits. Three heterotrimers associate to form the active enzyme.

Its subcellular location is the cytoplasm. It catalyses the reaction urea + 2 H2O + H(+) = hydrogencarbonate + 2 NH4(+). The protein operates within nitrogen metabolism; urea degradation; CO(2) and NH(3) from urea (urease route): step 1/1. The chain is Urease subunit beta from Ruegeria sp. (strain TM1040) (Silicibacter sp.).